A 187-amino-acid chain; its full sequence is Peptide methionine sulfoxide reductase A2-1 (187 aa).

This sequence belongs to the MsrA Met sulfoxide reductase family.

Its subcellular location is the cytoplasm. The protein localises to the cytosol. It catalyses the reaction L-methionyl-[protein] + [thioredoxin]-disulfide + H2O = L-methionyl-(S)-S-oxide-[protein] + [thioredoxin]-dithiol. The catalysed reaction is [thioredoxin]-disulfide + L-methionine + H2O = L-methionine (S)-S-oxide + [thioredoxin]-dithiol. Catalyzes the reduction of methionine sulfoxide (MetSO) to methionine in proteins. Plays a protective role against oxidative stress by restoring activity to proteins that have been inactivated by methionine oxidation. MSRA family specifically reduces the MetSO S-enantiomer. The chain is Peptide methionine sulfoxide reductase A2-1 (MSRA2-1) from Oryza sativa subsp. japonica (Rice).